We begin with the raw amino-acid sequence, 500 residues long: Putative glucokinase-2 (500 aa).

Serine 2 carries the post-translational modification N-acetylserine. Serine 2 bears the Phosphoserine mark. The Hexokinase domain maps to 12 to 498; that stretch reads EALEDAVVEI…SGVGAALCAL (487 aa). Residues 74–217 form a hexokinase small subdomain region; that stretch reads NGTERGVLLA…LSMINVVALT (144 aa). Position 110 (lysine 110) interacts with ATP. A glucose-binding region spans residues 159 to 185; sequence KMGFTFSYPVDQTSLSSGTLIRWTKSF. The hexokinase large subdomain stretch occupies residues 218–487; it reads NDTVGTFLSH…RKIHLRLAKD (270 aa). Serine 470 bears the Phosphoserine mark. An ATP-binding site is contributed by 487 to 492; the sequence is DGSGVG.

It belongs to the hexokinase family.

It localises to the cytoplasm. It catalyses the reaction D-glucose + ATP = D-glucose 6-phosphate + ADP + H(+). It participates in carbohydrate degradation; glycolysis; D-glyceraldehyde 3-phosphate and glycerone phosphate from D-glucose: step 1/4. Putative glucokinase involved in phosphorylation of aldohexoses and glucose uptake. Involved in sporulation. Required for the full activation of the early meiotic inducer IME1. This chain is Putative glucokinase-2 (EMI2), found in Saccharomyces cerevisiae (strain ATCC 204508 / S288c) (Baker's yeast).